The following is a 157-amino-acid chain: Putative tRNA (cytidine(34)-2'-O)-methyltransferase (157 aa).

3 residues coordinate S-adenosyl-L-methionine: isoleucine 79, glycine 104, and isoleucine 125.

Belongs to the class IV-like SAM-binding methyltransferase superfamily. RNA methyltransferase TrmH family. TrmL subfamily.

The protein localises to the cytoplasm. It catalyses the reaction cytidine(34) in tRNA + S-adenosyl-L-methionine = 2'-O-methylcytidine(34) in tRNA + S-adenosyl-L-homocysteine + H(+). The enzyme catalyses 5-carboxymethylaminomethyluridine(34) in tRNA(Leu) + S-adenosyl-L-methionine = 5-carboxymethylaminomethyl-2'-O-methyluridine(34) in tRNA(Leu) + S-adenosyl-L-homocysteine + H(+). In terms of biological role, could methylate the ribose at the nucleotide 34 wobble position in tRNA. This Geobacillus stearothermophilus (Bacillus stearothermophilus) protein is Putative tRNA (cytidine(34)-2'-O)-methyltransferase.